The sequence spans 274 residues: Large ribosomal subunit protein uL2 (274 aa).

Residues 224–256 are disordered; it reads AMNPIDHPHGGGEGRTGEGRHAVDPWGNLTKGY. A compositionally biased stretch (basic and acidic residues) spans 229–246; that stretch reads DHPHGGGEGRTGEGRHAV.

The protein belongs to the universal ribosomal protein uL2 family. Part of the 50S ribosomal subunit. Forms a bridge to the 30S subunit in the 70S ribosome.

One of the primary rRNA binding proteins. Required for association of the 30S and 50S subunits to form the 70S ribosome, for tRNA binding and peptide bond formation. It has been suggested to have peptidyltransferase activity; this is somewhat controversial. Makes several contacts with the 16S rRNA in the 70S ribosome. This chain is Large ribosomal subunit protein uL2, found in Acidovorax ebreus (strain TPSY) (Diaphorobacter sp. (strain TPSY)).